A 126-amino-acid polypeptide reads, in one-letter code: Non-specific lipid-transfer protein 15 (126 aa).

The first 22 residues, 1–22 (MSKSIFVVCITLLVVLSPTLNA), serve as a signal peptide directing secretion. 4 cysteine pairs are disulfide-bonded: Cys34-Cys80, Cys45-Cys57, Cys58-Cys100, and Cys78-Cys114.

The protein belongs to the plant LTP family.

Functionally, plant non-specific lipid-transfer proteins transfer phospholipids as well as galactolipids across membranes. May play a role in wax or cutin deposition in the cell walls of expanding epidermal cells and certain secretory tissues. The protein is Non-specific lipid-transfer protein 15 (LTP15) of Arabidopsis thaliana (Mouse-ear cress).